The primary structure comprises 550 residues: Putative golgin subfamily A member 6-like protein 19 (550 aa).

The span at 1 to 11 shows a compositional bias: pro residues; it reads MWPQPRLPPHP. Positions 1–77 are disordered; that stretch reads MWPQPRLPPH…DSATGVYGEG (77 aa). A compositionally biased stretch (polar residues) spans 51–62; the sequence is NGSSPDTATSGG. The stretch at 157–405 forms a coiled coil; that stretch reads SKVEQLQDET…QERLRQQDER (249 aa). The segment covering 467-480 has biased composition (basic and acidic residues); sequence KELEKSGGAEEPRG. The segment at 467–529 is disordered; that stretch reads KELEKSGGAE…VGTGEAAGGA (63 aa). Composition is skewed to low complexity over residues 484–499 and 517–529; these read AAAA…PQGA and GEAV…AGGA.

Belongs to the GOLGA6 family.

This Homo sapiens (Human) protein is Putative golgin subfamily A member 6-like protein 19 (GOLGA6L19).